The sequence spans 200 residues: Inner membrane-spanning protein YciB (200 aa).

5 consecutive transmembrane segments (helical) span residues 32–52 (FVAT…SYVV), 56–76 (VPLM…LTLV), 93–113 (LFAV…AILF), 126–146 (FLTI…EVIW), and 153–173 (FWVA…AMTQ).

This sequence belongs to the YciB family.

It is found in the cell inner membrane. In terms of biological role, plays a role in cell envelope biogenesis, maintenance of cell envelope integrity and membrane homeostasis. The protein is Inner membrane-spanning protein YciB of Afipia carboxidovorans (strain ATCC 49405 / DSM 1227 / KCTC 32145 / OM5) (Oligotropha carboxidovorans).